Here is a 287-residue protein sequence, read N- to C-terminus: Bifunctional protein FolD (287 aa).

NADP(+) contacts are provided by residues 166 to 168 (GAS), S191, and I232.

It belongs to the tetrahydrofolate dehydrogenase/cyclohydrolase family. In terms of assembly, homodimer.

It carries out the reaction (6R)-5,10-methylene-5,6,7,8-tetrahydrofolate + NADP(+) = (6R)-5,10-methenyltetrahydrofolate + NADPH. The enzyme catalyses (6R)-5,10-methenyltetrahydrofolate + H2O = (6R)-10-formyltetrahydrofolate + H(+). It functions in the pathway one-carbon metabolism; tetrahydrofolate interconversion. Functionally, catalyzes the oxidation of 5,10-methylenetetrahydrofolate to 5,10-methenyltetrahydrofolate and then the hydrolysis of 5,10-methenyltetrahydrofolate to 10-formyltetrahydrofolate. This chain is Bifunctional protein FolD, found in Haemophilus ducreyi (strain 35000HP / ATCC 700724).